Here is a 1893-residue protein sequence, read N- to C-terminus: Nestin (1893 aa).

An N-acetylmethionine modification is found at Met1. Residues 1 to 7 are head; that stretch reads MEGCVGE. Positions 8–43 are coil 1A; it reads ESFQMWELNRRLEAYLTRVKTLEEQNQLLSAELGGL. The IF rod domain maps to 8 to 314; that stretch reads ESFQMWELNR…TLLEAENSRL (307 aa). The tract at residues 44–55 is linker 1; the sequence is RAQSGDTSWRAR. A coil 1B region spans residues 56 to 151; that stretch reads ADDELASLRI…AAHEEERAHL (96 aa). The tract at residues 150–172 is disordered; it reads HLNAQAACAPRRPPAPPHGSPVR. The tract at residues 152–174 is linker 12; the sequence is NAQAACAPRRPPAPPHGSPVRAP. Residues 175 to 193 are coil 2A; that stretch reads EVEDLARRLGEVWRGAVRD. Positions 194-196 are linker 2; sequence YQE. The interval 197 to 314 is coil 2B; that stretch reads RVAHMESSLG…TLLEAENSRL (118 aa). Phosphoserine is present on Ser312. Positions 315–1893 are tail; that stretch reads QTPGRGSQAS…DGDSWSSGED (1579 aa). The residue at position 316 (Thr316) is a Phosphothreonine. Phosphoserine occurs at positions 356 and 359. At Thr389 the chain carries Phosphothreonine. Disordered stretches follow at residues 437–479, 507–529, and 556–879; these read PELE…SGSR, NSSA…SQGP, and KENC…NQKS. The span at 507–517 shows a compositional bias: polar residues; the sequence is NSSAQKTQESG. Phosphoserine is present on Ser562. Composition is skewed to basic and acidic residues over residues 572–595 and 606–615; these read GPEK…EKTL and LGKEDTRTED. Ser620 is subject to Phosphoserine. Basic and acidic residues-rich tracts occupy residues 634–646 and 670–681; these read ESQE…KEGN and MLERLVEKEDQS. 2 positions are modified to phosphoserine: Ser685 and Ser729. Composition is skewed to basic and acidic residues over residues 717–730, 761–774, 802–818, and 846–879; these read RLIE…LRSP, RLIE…LRSA, ILER…LRSP, and MLER…NQKS. The residue at position 817 (Ser817) is a Phosphoserine. Ser903 carries the phosphoserine modification. Composition is skewed to basic and acidic residues over residues 949–966 and 989–1051; these read LLED…DRNG and QRIV…KSLE. The tract at residues 949–1130 is disordered; that stretch reads LLEDKTHKSL…ARSLGKENQE (182 aa). Phosphoserine is present on residues Ser1005 and Ser1049. Residue Lys1136 forms a Glycyl lysine isopeptide (Lys-Gly) (interchain with G-Cter in SUMO1); alternate linkage. Lys1136 is covalently cross-linked (Glycyl lysine isopeptide (Lys-Gly) (interchain with G-Cter in SUMO2); alternate). Ser1145 and Ser1166 each carry phosphoserine. The tract at residues 1155–1222 is disordered; that stretch reads ETAEEDLERR…ELSSLGKWNV (68 aa). Residues 1198-1212 show a composition bias toward basic and acidic residues; that stretch reads DENRETLTSLEKESQ. 2 positions are modified to phosphoserine: Ser1216 and Ser1229. Residues 1237-1263 form a disordered region; sequence EGLQEEQHQESLREVKQELPSSGNQQR. A compositionally biased stretch (basic and acidic residues) spans 1241 to 1253; the sequence is EEQHQESLREVKQ. Ser1322 carries the phosphoserine modification. Disordered stretches follow at residues 1336–1369 and 1388–1824; these read DNLE…EQDS and EVVG…SEQV. Basic and acidic residues-rich tracts occupy residues 1354 to 1363 and 1393 to 1403; these read VTERDEDRAQ and EDPRHFAREEA. 2 stretches are compositionally biased toward acidic residues: residues 1458-1469 and 1561-1576; these read ESMEGWEEEEAS and QDWE…DDLG. Ser1570, Ser1594, Ser1686, Ser1695, Ser1772, and Ser1774 each carry phosphoserine. Residues 1688-1709 show a composition bias toward acidic residues; that stretch reads GFADEEESGEEGEEEDADEEGA. The span at 1773-1788 shows a compositional bias: acidic residues; sequence GSEESESASLEGEEGQ. Residues 1815–1824 show a composition bias toward polar residues; it reads QSPNLDSEQV. 3 positions are modified to phosphoserine: Ser1866, Ser1889, and Ser1890. The interval 1870–1893 is disordered; it reads LGPSQPLKFTLSGVDGDSWSSGED.

The protein belongs to the intermediate filament family. Forms homodimers and homotetramers in vitro. In mixtures with other intermediate filament proteins such as vimentin and alpha-internexin, this protein preferentially forms heterodimers which can assemble to form intermediate filaments if nestin does not exceed 25%. Interacts with FHOD3. In terms of processing, constitutively phosphorylated. This increases during mitosis when the cytoplasmic intermediate filament network is reorganized. In terms of tissue distribution, CNS stem cells.

Required for brain and eye development. Promotes the disassembly of phosphorylated vimentin intermediate filaments (IF) during mitosis and may play a role in the trafficking and distribution of IF proteins and other cellular factors to daughter cells during progenitor cell division. Required for survival, renewal and mitogen-stimulated proliferation of neural progenitor cells. In Rattus norvegicus (Rat), this protein is Nestin (Nes).